Consider the following 238-residue polypeptide: Urease subunit alpha (238 aa).

The interval 1–102 is urease gamma; it reads MKLTPKELDK…LVTVHTPIEA (102 aa). The tract at residues 103 to 238 is urease beta; it reads NGKLVPGELF…DDNYVKTIKE (136 aa).

This sequence in the N-terminal section; belongs to the urease gamma subunit family. The protein in the C-terminal section; belongs to the urease beta subunit family. As to quaternary structure, heterohexamer of 3 UreA (alpha) and 3 UreB (beta) subunits.

Its subcellular location is the cytoplasm. The enzyme catalyses urea + 2 H2O + H(+) = hydrogencarbonate + 2 NH4(+). Its pathway is nitrogen metabolism; urea degradation; CO(2) and NH(3) from urea (urease route): step 1/1. The chain is Urease subunit alpha from Helicobacter pylori (strain P12).